The following is a 114-amino-acid chain: Ribonuclease P protein component (114 aa).

It belongs to the RnpA family. In terms of assembly, consists of a catalytic RNA component (M1 or rnpB) and a protein subunit.

It catalyses the reaction Endonucleolytic cleavage of RNA, removing 5'-extranucleotides from tRNA precursor.. In terms of biological role, RNaseP catalyzes the removal of the 5'-leader sequence from pre-tRNA to produce the mature 5'-terminus. It can also cleave other RNA substrates such as 4.5S RNA. The protein component plays an auxiliary but essential role in vivo by binding to the 5'-leader sequence and broadening the substrate specificity of the ribozyme. This Lactiplantibacillus plantarum (strain ATCC BAA-793 / NCIMB 8826 / WCFS1) (Lactobacillus plantarum) protein is Ribonuclease P protein component.